The primary structure comprises 436 residues: Ribulose bisphosphate carboxylase large chain (436 aa).

Substrate contacts are provided by Asn104 and Thr154. Residue Lys156 is the Proton acceptor of the active site. Lys158 contributes to the substrate binding site. Mg(2+) is bound by residues Lys182, Asp184, and Glu185. Lys182 carries the post-translational modification N6-carboxylysine. Residue His275 is the Proton acceptor of the active site. Substrate is bound by residues Arg276, His308, and Ser360.

Belongs to the RuBisCO large chain family. Type I subfamily. Heterohexadecamer of 8 large chains and 8 small chains. Mg(2+) serves as cofactor.

It is found in the plastid. The protein localises to the chloroplast. The catalysed reaction is 2 (2R)-3-phosphoglycerate + 2 H(+) = D-ribulose 1,5-bisphosphate + CO2 + H2O. It carries out the reaction D-ribulose 1,5-bisphosphate + O2 = 2-phosphoglycolate + (2R)-3-phosphoglycerate + 2 H(+). Functionally, ruBisCO catalyzes two reactions: the carboxylation of D-ribulose 1,5-bisphosphate, the primary event in carbon dioxide fixation, as well as the oxidative fragmentation of the pentose substrate in the photorespiration process. Both reactions occur simultaneously and in competition at the same active site. The polypeptide is Ribulose bisphosphate carboxylase large chain (Euglena myxocylindracea).